Here is an 867-residue protein sequence, read N- to C-terminus: Heat shock 70 kDa protein 17 (867 aa).

The first 24 residues, Met-1 to Ser-24, serve as a signal peptide directing secretion. Composition is skewed to polar residues over residues Thr-560–Glu-575 and Asp-587–Ala-598. 2 disordered regions span residues Thr-560–Gly-607 and Pro-829–Leu-867. Positions Pro-833 to Leu-867 are enriched in basic and acidic residues. The short motif at Asp-865–Leu-867 is the Prevents secretion from ER element.

This sequence belongs to the heat shock protein 70 (TC 1.A.33) family. HSP110/SSE subfamily.

It is found in the endoplasmic reticulum lumen. This Arabidopsis thaliana (Mouse-ear cress) protein is Heat shock 70 kDa protein 17 (HSP70-17).